A 310-amino-acid chain; its full sequence is Protoheme IX farnesyltransferase (310 aa).

The next 9 helical transmembrane spans lie at 26-46, 47-67, 95-115, 118-138, 147-167, 174-194, 220-240, 243-263, and 281-301; these read VMSL…ATVH, PMIA…SGAL, GEAL…LGLA, LFAA…YSMW, IVIG…VATG, LFMF…LALF, VLAY…TGIG, LYLV…VRIW, and FFRF…AEAA.

Belongs to the UbiA prenyltransferase family. Protoheme IX farnesyltransferase subfamily. In terms of assembly, interacts with CtaA.

It is found in the cell inner membrane. It carries out the reaction heme b + (2E,6E)-farnesyl diphosphate + H2O = Fe(II)-heme o + diphosphate. The protein operates within porphyrin-containing compound metabolism; heme O biosynthesis; heme O from protoheme: step 1/1. Converts heme B (protoheme IX) to heme O by substitution of the vinyl group on carbon 2 of heme B porphyrin ring with a hydroxyethyl farnesyl side group. This Cereibacter sphaeroides (strain ATCC 17025 / ATH 2.4.3) (Rhodobacter sphaeroides) protein is Protoheme IX farnesyltransferase.